The following is a 396-amino-acid chain: Lysophospholipid transporter LplT (396 aa).

At 1–17 the chain is on the periplasmic side; the sequence is MSESVHTNTSLWSKGMK. The helical transmembrane segment at 18-38 threads the bilayer; sequence AVIVAQFLSAFGDNALLFATL. At 39–52 the chain is on the cytoplasmic side; the sequence is ALLKAQFYPEWSQP. A helical membrane pass occupies residues 53–73; sequence ILQMVFVGAYILLAPFVGQVA. Residues 74 to 90 are Periplasmic-facing; the sequence is DSFAKGRVMMFANGLKL. The helical transmembrane segment at 91 to 111 threads the bilayer; sequence LGAASICFGINPFLGYTLVGV. The Cytoplasmic portion of the chain corresponds to 112–144; sequence GAAAYSPAKYGILGELTTGSKLVKANGLMEASA. The chain crosses the membrane as a helical span at residues 145 to 165; sequence IAAILLGSVAGGVLADWHVLV. Position 166 (A166) is a topological domain, periplasmic. The helical transmembrane segment at 167–187 threads the bilayer; sequence LAACALAYGGAVVANIYIPKL. Residues 188 to 225 lie on the Cytoplasmic side of the membrane; it reads AARPGQSWNLINMTRSFLNACTSLWCNGETRFSLVGTS. The helical transmembrane segment at 226-246 threads the bilayer; sequence LFWGAGVTLRFLLVLWVPVAL. Over 247–255 the chain is Periplasmic; sequence GITDNATPT. The chain crosses the membrane as a helical span at residues 256-276; the sequence is YLNAMVAIGIVVGAGAAAKLV. Residues 277–279 are Cytoplasmic-facing; it reads TLE. Residues 280 to 300 traverse the membrane as a helical segment; it reads TVSRCMPAGILIGVVVPIFSL. Topologically, residues 301–303 are periplasmic; it reads QHE. A helical membrane pass occupies residues 304-324; sequence LLPAYALLMLIGVLGGFFVVP. At 325–342 the chain is on the cytoplasmic side; it reads LNALLQERGKKSVGAGNA. A helical membrane pass occupies residues 343-363; sequence IAVQNLGENSAMLLMLGIYSL. The Periplasmic portion of the chain corresponds to 364-365; sequence AV. Residues 366–386 form a helical membrane-spanning segment; the sequence is MVGIPVVPIGIGFGALFALAI. The Cytoplasmic portion of the chain corresponds to 387-396; that stretch reads TALWIWQRRH.

It belongs to the major facilitator superfamily. LplT (TC 2.A.1.42) family.

Its subcellular location is the cell inner membrane. Its function is as follows. Catalyzes the facilitated diffusion of 2-acyl-glycero-3-phosphoethanolamine (2-acyl-GPE) into the cell. The sequence is that of Lysophospholipid transporter LplT from Shigella flexneri.